We begin with the raw amino-acid sequence, 204 residues long: Glycerol-3-phosphate acyltransferase (204 aa).

4 consecutive transmembrane segments (helical) span residues asparagine 8–alanine 28, glycine 76–isoleucine 96, methionine 122–leucine 142, and phenylalanine 166–tyrosine 186.

This sequence belongs to the PlsY family. As to quaternary structure, probably interacts with PlsX.

It is found in the cell inner membrane. It carries out the reaction an acyl phosphate + sn-glycerol 3-phosphate = a 1-acyl-sn-glycero-3-phosphate + phosphate. The protein operates within lipid metabolism; phospholipid metabolism. In terms of biological role, catalyzes the transfer of an acyl group from acyl-phosphate (acyl-PO(4)) to glycerol-3-phosphate (G3P) to form lysophosphatidic acid (LPA). This enzyme utilizes acyl-phosphate as fatty acyl donor, but not acyl-CoA or acyl-ACP. The chain is Glycerol-3-phosphate acyltransferase from Sulfurimonas denitrificans (strain ATCC 33889 / DSM 1251) (Thiomicrospira denitrificans (strain ATCC 33889 / DSM 1251)).